The primary structure comprises 337 residues: Pyridoxal 5'-phosphate synthase subunit PdxS (337 aa).

Residue Asp65 participates in D-ribose 5-phosphate binding. Catalysis depends on Lys122, which acts as the Schiff-base intermediate with D-ribose 5-phosphate. Gly194 is a D-ribose 5-phosphate binding site. A D-glyceraldehyde 3-phosphate-binding site is contributed by Lys206. Residues Gly255 and 276–277 (GS) contribute to the D-ribose 5-phosphate site.

Belongs to the PdxS/SNZ family. In terms of assembly, in the presence of PdxT, forms a dodecamer of heterodimers.

The catalysed reaction is aldehydo-D-ribose 5-phosphate + D-glyceraldehyde 3-phosphate + L-glutamine = pyridoxal 5'-phosphate + L-glutamate + phosphate + 3 H2O + H(+). The protein operates within cofactor biosynthesis; pyridoxal 5'-phosphate biosynthesis. Its function is as follows. Catalyzes the formation of pyridoxal 5'-phosphate from ribose 5-phosphate (RBP), glyceraldehyde 3-phosphate (G3P) and ammonia. The ammonia is provided by the PdxT subunit. Can also use ribulose 5-phosphate and dihydroxyacetone phosphate as substrates, resulting from enzyme-catalyzed isomerization of RBP and G3P, respectively. The sequence is that of Pyridoxal 5'-phosphate synthase subunit PdxS from Metallosphaera sedula (strain ATCC 51363 / DSM 5348 / JCM 9185 / NBRC 15509 / TH2).